The primary structure comprises 506 residues: Histidine ammonia-lyase (506 aa).

A cross-link (5-imidazolinone (Ala-Gly)) is located at residues 143-145; that stretch reads ASG. The residue at position 144 (Ser-144) is a 2,3-didehydroalanine (Ser).

The protein belongs to the PAL/histidase family. In terms of processing, contains an active site 4-methylidene-imidazol-5-one (MIO), which is formed autocatalytically by cyclization and dehydration of residues Ala-Ser-Gly.

It localises to the cytoplasm. It carries out the reaction L-histidine = trans-urocanate + NH4(+). It functions in the pathway amino-acid degradation; L-histidine degradation into L-glutamate; N-formimidoyl-L-glutamate from L-histidine: step 1/3. The protein is Histidine ammonia-lyase of Salmonella gallinarum (strain 287/91 / NCTC 13346).